The primary structure comprises 731 residues: Actin filament-associated protein 1 (731 aa).

Position 1 is an N-acetylmethionine (Met1). Residues Val46–Glu90 are disordered. Over residues Pro59–Pro84 the composition is skewed to pro residues. The short motif at Pro70–Trp73 is the SH3-binding element. The short motif at Tyr93–Ala96 is the SH2-binding 1 element. Residues Gly118–His138 form a disordered region. The PH 1 domain occupies Asp152–Ser248. A disordered region spans residues Gly252 to Ser318. The span at Ala271–Ser284 shows a compositional bias: basic and acidic residues. 2 positions are modified to phosphoserine: Ser283 and Ser284. Residues Asp348–Gly442 enclose the PH 2 domain. The SH2-binding 2 motif lies at Tyr452–Val457. The interval Ser511–Asn550 is disordered. Ser549 is modified (phosphoserine). The stretch at Lys558–Ala649 forms a coiled coil. Positions Asp595–Thr638 are interaction with F-actin. Residues Ala657 to Thr731 are disordered. Phosphoserine is present on residues Ser665, Ser666, and Ser669. Thr676 carries the post-translational modification Phosphothreonine. Residues Glu678 to Thr687 show a composition bias toward polar residues. Phosphoserine is present on residues Ser680 and Ser688. Basic and acidic residues predominate over residues Lys721 to Thr731.

As to quaternary structure, monomer and homomultimer. Interacts via its C-terminus with F-actin; probably involving AFAP1 multimers. Interacts with activated SRC SH3-SH2 domains. Interacts via its PH 1 domain with PRKCA, PRKCB and PRKCI. Phosphorylated on tyrosine residues. In terms of tissue distribution, widely expressed with highest levels in brain.

It localises to the cytoplasm. It is found in the cytoskeleton. The protein localises to the stress fiber. Functionally, can cross-link actin filaments into both network and bundle structures. May modulate changes in actin filament integrity and induce lamellipodia formation. May function as an adapter molecule that links other proteins, such as SRC and PKC to the actin cytoskeleton. This is Actin filament-associated protein 1 (Afap1) from Rattus norvegicus (Rat).